The sequence spans 777 residues: uncharacterized protein (777 aa).

8 disordered regions span residues 1–101 (MNNN…NLSN), 128–150 (SYNN…NDDN), 219–267 (HHIH…NNMN), 334–366 (SLPF…GIDD), 391–466 (ISNS…ATIS), 529–577 (KNLN…NNKG), 590–622 (LAQE…ISTI), and 713–751 (EKQG…KWKP). Low complexity-rich tracts occupy residues 128–147 (SYNN…NNIN) and 243–265 (NNNN…NHNN). Residues 334–343 (SLPFSSLSDN) are compositionally biased toward polar residues. The segment covering 344–366 (NGDDDDDGIDDGIDDGIDDGIDD) has biased composition (acidic residues). Residues 391-407 (ISNSFHQNQSPCNNSFK) are compositionally biased toward polar residues. Composition is skewed to low complexity over residues 408 to 466 (NNNN…ATIS) and 532 to 574 (NNNN…NNKN). Residues 597 to 606 (EQNKTKKELE) show a composition bias toward basic and acidic residues. Acidic residues-rich tracts occupy residues 607 to 620 (EVKE…EEIS) and 718 to 730 (DDPE…DSDS). Residues 731 to 740 (DSNSNSDSSD) show a composition bias toward low complexity.

This is an uncharacterized protein from Dictyostelium discoideum (Social amoeba).